A 159-amino-acid polypeptide reads, in one-letter code: MKIKLICVGKLKEAYLRDGIAEYQKRLSRFCQCDIIELADEKTPDKASHAEKQQIMAKEADRIKKKLGQRDFVIALAIEGKQLASEQFSHLLSEVTVKGYSDIAFVIGGSLGLDQSIKNRANLLMSFGLLTLPHQLMRLVLIEQVYRAFMIQQGSPYHK.

S-adenosyl-L-methionine contacts are provided by residues leucine 76, glycine 108, and 127–132 (FGLLTL).

It belongs to the RNA methyltransferase RlmH family. As to quaternary structure, homodimer.

The protein resides in the cytoplasm. It catalyses the reaction pseudouridine(1915) in 23S rRNA + S-adenosyl-L-methionine = N(3)-methylpseudouridine(1915) in 23S rRNA + S-adenosyl-L-homocysteine + H(+). Specifically methylates the pseudouridine at position 1915 (m3Psi1915) in 23S rRNA. This is Ribosomal RNA large subunit methyltransferase H from Streptococcus equi subsp. zooepidemicus (strain H70).